Here is a 131-residue protein sequence, read N- to C-terminus: Peptide methionine sulfoxide reductase MsrB (131 aa).

Residues 9 to 131 (DEDWKKELTP…NSASLKFQKE (123 aa)) enclose the MsrB domain. Cys48, Cys51, Cys97, and Cys100 together coordinate Zn(2+). Catalysis depends on Cys120, which acts as the Nucleophile.

Belongs to the MsrB Met sulfoxide reductase family. It depends on Zn(2+) as a cofactor.

It catalyses the reaction L-methionyl-[protein] + [thioredoxin]-disulfide + H2O = L-methionyl-(R)-S-oxide-[protein] + [thioredoxin]-dithiol. This is Peptide methionine sulfoxide reductase MsrB from Leptospira interrogans serogroup Icterohaemorrhagiae serovar Lai (strain 56601).